The sequence spans 290 residues: Phosphatidylserine decarboxylase proenzyme (290 aa).

Active-site charge relay system; for autoendoproteolytic cleavage activity residues include Asp-96, His-153, and Ser-257. Catalysis depends on Ser-257, which acts as the Schiff-base intermediate with substrate; via pyruvic acid; for decarboxylase activity. At Ser-257 the chain carries Pyruvic acid (Ser); by autocatalysis.

It belongs to the phosphatidylserine decarboxylase family. PSD-B subfamily. Prokaryotic type I sub-subfamily. As to quaternary structure, heterodimer of a large membrane-associated beta subunit and a small pyruvoyl-containing alpha subunit. Pyruvate is required as a cofactor. Post-translationally, is synthesized initially as an inactive proenzyme. Formation of the active enzyme involves a self-maturation process in which the active site pyruvoyl group is generated from an internal serine residue via an autocatalytic post-translational modification. Two non-identical subunits are generated from the proenzyme in this reaction, and the pyruvate is formed at the N-terminus of the alpha chain, which is derived from the carboxyl end of the proenzyme. The autoendoproteolytic cleavage occurs by a canonical serine protease mechanism, in which the side chain hydroxyl group of the serine supplies its oxygen atom to form the C-terminus of the beta chain, while the remainder of the serine residue undergoes an oxidative deamination to produce ammonia and the pyruvoyl prosthetic group on the alpha chain. During this reaction, the Ser that is part of the protease active site of the proenzyme becomes the pyruvoyl prosthetic group, which constitutes an essential element of the active site of the mature decarboxylase.

The protein resides in the cell membrane. It carries out the reaction a 1,2-diacyl-sn-glycero-3-phospho-L-serine + H(+) = a 1,2-diacyl-sn-glycero-3-phosphoethanolamine + CO2. It participates in phospholipid metabolism; phosphatidylethanolamine biosynthesis; phosphatidylethanolamine from CDP-diacylglycerol: step 2/2. In terms of biological role, catalyzes the formation of phosphatidylethanolamine (PtdEtn) from phosphatidylserine (PtdSer). The protein is Phosphatidylserine decarboxylase proenzyme of Haemophilus influenzae (strain 86-028NP).